The sequence spans 375 residues: 23S rRNA (uracil(747)-C(5))-methyltransferase RlmC (375 aa).

4 residues coordinate [4Fe-4S] cluster: Cys-3, Cys-11, Cys-14, and Cys-87. Residues Gln-212, Phe-241, Glu-262, and Asn-307 each coordinate S-adenosyl-L-methionine. The active-site Nucleophile is Cys-334.

The protein belongs to the class I-like SAM-binding methyltransferase superfamily. RNA M5U methyltransferase family. RlmC subfamily.

It catalyses the reaction uridine(747) in 23S rRNA + S-adenosyl-L-methionine = 5-methyluridine(747) in 23S rRNA + S-adenosyl-L-homocysteine + H(+). Catalyzes the formation of 5-methyl-uridine at position 747 (m5U747) in 23S rRNA. This is 23S rRNA (uracil(747)-C(5))-methyltransferase RlmC from Salmonella dublin (strain CT_02021853).